Reading from the N-terminus, the 286-residue chain is MDFLNDHINVFGLIAALVILVLTIYESSSLIKEMRDSKSQGELVENGHLIDGIGEFANNVPVGWIASFMCTIVWAFWYFFFGYPLNSFSQIGQYNEEVKAHNQKFEAKWKHLGQKELVDMGQGIFLVHCSQCHGITAEGLHGSAQNLVRWGKEEGIMDTIKHGSKGMDYLAGEMPAMELDEKDAKAIASYVMAELSSVKKTKNPQLIDKGKELFESMGCTGCHGNDGKGLQENQVFAADLTAYGTENFLRNILTHGKKGNIGHMPSFKYKNFSDLQVKALLNLSNR.

2 consecutive transmembrane segments (helical) span residues 11-31 (FGLIAALVILVLTIYESSSLI) and 62-82 (VGWIASFMCTIVWAFWYFFFG). Cytochrome c domains lie at 116-195 (ELVD…MAEL) and 205-286 (QLID…LSNR). 8 residues coordinate heme c: Cys-129, Cys-132, His-133, Met-174, Cys-219, Cys-222, His-223, and Met-264.

Belongs to the CcoP / FixP family. As to quaternary structure, component of the cbb3-type cytochrome c oxidase at least composed of CcoN, CcoO, CcoQ and CcoP. The cofactor is heme c.

It is found in the cell inner membrane. It functions in the pathway energy metabolism; oxidative phosphorylation. C-type cytochrome. Part of the cbb3-type cytochrome c oxidase complex. CcoP subunit is required for transferring electrons from donor cytochrome c via its heme groups to CcoO subunit. From there, electrons are shuttled to the catalytic binuclear center of CcoN subunit where oxygen reduction takes place. The complex also functions as a proton pump. The chain is Cbb3-type cytochrome c oxidase subunit CcoP from Helicobacter pylori (strain ATCC 700392 / 26695) (Campylobacter pylori).